The primary structure comprises 458 residues: Sulfite efflux pump SSU1 (458 aa).

Residues 1–11 (MVANWVLALTR) are Cytoplasmic-facing. A helical transmembrane segment spans residues 12-32 (QFDPFMFMMVMGVGISSNILY). Over 33–48 (SFPYPARWLRICSYIM) the chain is Extracellular. A helical transmembrane segment spans residues 49–69 (FAIACLIFIAVQALQILHLIV). Topologically, residues 70 to 89 (YIKEKSFREYFNDFFRNMKH) are cytoplasmic. The chain crosses the membrane as a helical span at residues 90 to 110 (NLFWGTYPMGLVTIINFLGAL). Over 111 to 135 (SKANTTKSPTNARNLMIFVYVLWWY) the chain is Extracellular. Residues 136-156 (DLAVCLVIAWGISFLIWHDYY) form a helical membrane-spanning segment. At 157-176 (PLEGIGNYPSYNIKMASENM) the chain is on the cytoplasmic side. The helical transmembrane segment at 177-197 (KSVLLLDIIPLVVVASSCGTF) threads the bilayer. Over 198 to 220 (TMSEIFFHAFNRNIQLITLVICA) the chain is Extracellular. The helical transmembrane segment at 221-241 (LTWLHAIIFVFILIAIYFWSL) threads the bilayer. The Cytoplasmic segment spans residues 242-252 (YINKIPPMTQV). A helical transmembrane segment spans residues 253–275 (FTLFLLLGPMGQGSFGVLLLTDN). Over 276–309 (IKKYAGKYYPTDNITREQEILTIAVPWCFKILGM) the chain is Extracellular. A helical transmembrane segment spans residues 310–330 (VSAMALLAMGYFFTVISVVSI). Residues 331–350 (LSYYNKKEIENETGKVKRVY) are Cytoplasmic-facing. Residues 351–371 (TFHKGFWGMTFPMGTMSLGNE) form a helical membrane-spanning segment. Residues 372 to 387 (ELYVQYNQYVPLYAFR) lie on the Extracellular side of the membrane. The chain crosses the membrane as a helical span at residues 388 to 408 (VLGTIYGGVCVCWSILCLLCT). Residues 409-458 (LHEYSKKMLHAARKSSLFSESGTEKTTVSPYNSIESVEESNSALDFTRLA) lie on the Cytoplasmic side of the membrane. Phosphoserine is present on residues Ser-444, Ser-448, and Ser-450.

This sequence belongs to the tellurite-resistance/dicarboxylate transporter (TDT) family.

The protein resides in the cell membrane. Its function is as follows. Involved in efflux of free sulfite. Mutations in the SSU1 gene cause sensitivity to sulfite. The polypeptide is Sulfite efflux pump SSU1 (SSU1) (Saccharomyces cerevisiae (strain ATCC 204508 / S288c) (Baker's yeast)).